A 575-amino-acid polypeptide reads, in one-letter code: Urease subunit alpha (575 aa).

The region spanning 138-575 (GAVDCHVHLI…LPMTQRYFLF (438 aa)) is the Urease domain. His-143, His-145, and Lys-226 together coordinate Ni(2+). Lys-226 carries the post-translational modification N6-carboxylysine. His-228 is a substrate binding site. Ni(2+) contacts are provided by His-255 and His-281. Residue His-329 is the Proton donor of the active site. Asp-369 serves as a coordination point for Ni(2+).

It belongs to the metallo-dependent hydrolases superfamily. Urease alpha subunit family. As to quaternary structure, heterotrimer of UreA (gamma), UreB (beta) and UreC (alpha) subunits. Three heterotrimers associate to form the active enzyme. Ni cation serves as cofactor. In terms of processing, carboxylation allows a single lysine to coordinate two nickel ions.

The protein resides in the cytoplasm. It catalyses the reaction urea + 2 H2O + H(+) = hydrogencarbonate + 2 NH4(+). Its pathway is nitrogen metabolism; urea degradation; CO(2) and NH(3) from urea (urease route): step 1/1. This chain is Urease subunit alpha, found in Frankia casuarinae (strain DSM 45818 / CECT 9043 / HFP020203 / CcI3).